The sequence spans 648 residues: Biosynthetic arginine decarboxylase (648 aa).

Lys-109 carries the N6-(pyridoxal phosphate)lysine modification. 291-301 (LDVGGGLGVDY) lines the substrate pocket.

It belongs to the Orn/Lys/Arg decarboxylase class-II family. SpeA subfamily. Mg(2+) serves as cofactor. Pyridoxal 5'-phosphate is required as a cofactor.

It catalyses the reaction L-arginine + H(+) = agmatine + CO2. The protein operates within amine and polyamine biosynthesis; agmatine biosynthesis; agmatine from L-arginine: step 1/1. Functionally, catalyzes the biosynthesis of agmatine from arginine. This chain is Biosynthetic arginine decarboxylase, found in Prochlorococcus marinus (strain MIT 9303).